We begin with the raw amino-acid sequence, 351 residues long: uncharacterized protein (351 aa).

The Mn(2+) site is built by Asp-215, Asp-226, His-290, Glu-319, and Glu-333.

The protein belongs to the peptidase M24B family. Requires Mn(2+) as cofactor.

This is an uncharacterized protein from Staphylococcus aureus (strain MSSA476).